The sequence spans 677 residues: Gamma-tubulin complex subunit mod21 (677 aa).

As to quaternary structure, component of the gamma-tubulin complex composed of at least alp4, alp6, alp16, ghf1, gtb1 and mod21.

Its subcellular location is the cytoplasm. It localises to the cytoskeleton. The protein localises to the microtubule organizing center. The protein resides in the spindle pole body. Component of the gamma-tubulin complex that is required for the regulation of both interphase microtubule organization and nucleation, and mitotic bipolar spindles. Required for correct septation. This Schizosaccharomyces pombe (strain 972 / ATCC 24843) (Fission yeast) protein is Gamma-tubulin complex subunit mod21.